A 95-amino-acid chain; its full sequence is Aspartyl/glutamyl-tRNA(Asn/Gln) amidotransferase subunit C (95 aa).

Belongs to the GatC family. As to quaternary structure, heterotrimer of A, B and C subunits.

The catalysed reaction is L-glutamyl-tRNA(Gln) + L-glutamine + ATP + H2O = L-glutaminyl-tRNA(Gln) + L-glutamate + ADP + phosphate + H(+). It catalyses the reaction L-aspartyl-tRNA(Asn) + L-glutamine + ATP + H2O = L-asparaginyl-tRNA(Asn) + L-glutamate + ADP + phosphate + 2 H(+). Functionally, allows the formation of correctly charged Asn-tRNA(Asn) or Gln-tRNA(Gln) through the transamidation of misacylated Asp-tRNA(Asn) or Glu-tRNA(Gln) in organisms which lack either or both of asparaginyl-tRNA or glutaminyl-tRNA synthetases. The reaction takes place in the presence of glutamine and ATP through an activated phospho-Asp-tRNA(Asn) or phospho-Glu-tRNA(Gln). This is Aspartyl/glutamyl-tRNA(Asn/Gln) amidotransferase subunit C from Vesicomyosocius okutanii subsp. Calyptogena okutanii (strain HA).